The following is a 307-amino-acid chain: Bifunctional protein FolD (307 aa).

NADP(+) contacts are provided by residues glycine 170–serine 172, serine 195, and isoleucine 236.

It belongs to the tetrahydrofolate dehydrogenase/cyclohydrolase family. In terms of assembly, homodimer.

It carries out the reaction (6R)-5,10-methylene-5,6,7,8-tetrahydrofolate + NADP(+) = (6R)-5,10-methenyltetrahydrofolate + NADPH. It catalyses the reaction (6R)-5,10-methenyltetrahydrofolate + H2O = (6R)-10-formyltetrahydrofolate + H(+). It participates in one-carbon metabolism; tetrahydrofolate interconversion. Its function is as follows. Catalyzes the oxidation of 5,10-methylenetetrahydrofolate to 5,10-methenyltetrahydrofolate and then the hydrolysis of 5,10-methenyltetrahydrofolate to 10-formyltetrahydrofolate. This is Bifunctional protein FolD from Sinorhizobium fredii (strain NBRC 101917 / NGR234).